Reading from the N-terminus, the 1030-residue chain is Eukaryotic translation initiation factor 3 subunit A (1030 aa).

Positions 94-126 form a coiled coil; that stretch reads FKEIITPIEQKVDELKEKIEKENQENPLVEQNE. The region spanning 308–483 is the PCI domain; the sequence is SQLYSSVLLV…GVIRFGHYDF (176 aa). Coiled coils occupy residues 527-620 and 720-772; these read INSL…KAKI and IQQE…RKNA. Basic and acidic residues-rich tracts occupy residues 576-591, 743-771, 800-931, 939-985, and 1003-1019; these read RDQQRLKEDMERREKE, EKARKEEQERERLEQEHLEQERLEEERKN, RGGD…RRDG, GRRD…RRDG, and DSWRSDNKKEENKKDAD. Disordered regions lie at residues 576-603 and 737-1030; these read RDQQRLKEDMERREKEQAEEESQQNQLD and RIAA…KKRY.

The protein belongs to the eIF-3 subunit A family. Component of the eukaryotic translation initiation factor 3 (eIF-3) complex.

Its subcellular location is the cytoplasm. Its function is as follows. RNA-binding component of the eukaryotic translation initiation factor 3 (eIF-3) complex, which is involved in protein synthesis of a specialized repertoire of mRNAs and, together with other initiation factors, stimulates binding of mRNA and methionyl-tRNAi to the 40S ribosome. The eIF-3 complex specifically targets and initiates translation of a subset of mRNAs involved in cell proliferation. This chain is Eukaryotic translation initiation factor 3 subunit A (eif3A), found in Dictyostelium discoideum (Social amoeba).